The primary structure comprises 185 residues: MVKIVFSGPPGSGKTTQAKRVAEYYGLKYFSAGSLFREYARRKGVSLEELSRIALEDPSIDLEIDRMTLETVRDSDDIVIDGHLAAWIVSDIVDLKIYVTAPLTLRILRVAGRDNTPLGKALAETLIREYSQRRRFMEYYGIDIYDTSIFDLTINTKLIGVEEAFNIIKSIIDKILKEKHGSMSE.

8–16 (GPPGSGKTT) is a binding site for ATP.

This sequence belongs to the cytidylate kinase family. Type 2 subfamily.

It localises to the cytoplasm. It catalyses the reaction CMP + ATP = CDP + ADP. The enzyme catalyses dCMP + ATP = dCDP + ADP. This chain is Cytidylate kinase, found in Desulfurococcus amylolyticus (strain DSM 18924 / JCM 16383 / VKM B-2413 / 1221n) (Desulfurococcus kamchatkensis).